We begin with the raw amino-acid sequence, 199 residues long: Small ribosomal subunit protein uS2 (199 aa).

Belongs to the universal ribosomal protein uS2 family.

In Thermoplasma acidophilum (strain ATCC 25905 / DSM 1728 / JCM 9062 / NBRC 15155 / AMRC-C165), this protein is Small ribosomal subunit protein uS2 (rps2).